The sequence spans 436 residues: GTPase Der (436 aa).

EngA-type G domains lie at 4-167 and 176-351; these read PVVA…PKDH and IKFC…DNHA. Residues 10–17, 57–61, 119–122, 182–189, 229–233, and 294–297 each bind GTP; these read GRPNVGKS, DTGGI, NKID, DTAGM, and NKWD. In terms of domain architecture, KH-like spans 352 to 436; sequence MRVQTNVLNE…PIKIIARPRK (85 aa).

Belongs to the TRAFAC class TrmE-Era-EngA-EngB-Septin-like GTPase superfamily. EngA (Der) GTPase family. As to quaternary structure, associates with the 50S ribosomal subunit.

Functionally, GTPase that plays an essential role in the late steps of ribosome biogenesis. This is GTPase Der from Geobacillus thermodenitrificans (strain NG80-2).